The chain runs to 917 residues: Nitrate reductase [NADH] 2 (917 aa).

Residues 1-72 form a disordered region; sequence MAASVDNRQY…SEDENETHNS (72 aa). A compositionally biased stretch (polar residues) spans 37-47; that stretch reads AHQNQTTNQTV. Residues 57–67 show a composition bias toward acidic residues; sequence DDEDVSSEDEN. Residue cysteine 191 coordinates Mo-molybdopterin. The region spanning 542 to 617 is the Cytochrome b5 heme-binding domain; the sequence is AKMYSMSEVK…LEDYRIGELI (76 aa). Residues histidine 577 and histidine 600 each coordinate heme. Positions 660–772 constitute an FAD-binding FR-type domain; that stretch reads RAKVPVQLVE…KGPLGHVEYL (113 aa). Residues 712 to 715, 729 to 733, phenylalanine 734, phenylalanine 741, 746 to 748, and threonine 799 contribute to the FAD site; these read RAYT, VVKIY, and LMS.

It belongs to the nitrate reductase family. In terms of assembly, homodimer. FAD serves as cofactor. The cofactor is heme. It depends on Mo-molybdopterin as a cofactor. In terms of tissue distribution, root, leaf, and shoot.

It catalyses the reaction nitrite + NAD(+) + H2O = nitrate + NADH + H(+). In terms of biological role, nitrate reductase is a key enzyme involved in the first step of nitrate assimilation in plants, fungi and bacteria. This chain is Nitrate reductase [NADH] 2 (NIA2), found in Arabidopsis thaliana (Mouse-ear cress).